A 374-amino-acid polypeptide reads, in one-letter code: DNA replication and repair protein RecF (374 aa).

34–41 contributes to the ATP binding site; it reads GDNGAGKT.

This sequence belongs to the RecF family.

Its subcellular location is the cytoplasm. Its function is as follows. The RecF protein is involved in DNA metabolism; it is required for DNA replication and normal SOS inducibility. RecF binds preferentially to single-stranded, linear DNA. It also seems to bind ATP. The protein is DNA replication and repair protein RecF of Rhizobium johnstonii (strain DSM 114642 / LMG 32736 / 3841) (Rhizobium leguminosarum bv. viciae).